Here is a 113-residue protein sequence, read N- to C-terminus: Protein translation factor SUI1 homolog 1 (113 aa).

Residues 1–24 form a disordered region; sequence MSELDSQVPTAFDPFADANAEDSG. Position 2 is an N-acetylserine (Ser-2).

Belongs to the SUI1 family.

In terms of biological role, probably involved in translation. This is Protein translation factor SUI1 homolog 1 from Arabidopsis thaliana (Mouse-ear cress).